The primary structure comprises 433 residues: Anthranilate synthase component 1 (433 aa).

Residues S29 and 219-221 (PYT) each bind L-tryptophan. Position 253 to 254 (253 to 254 (GT)) interacts with chorismate. Residue E280 coordinates Mg(2+). Chorismate contacts are provided by residues Y368, R388, 402–404 (GAG), and G404. E417 provides a ligand contact to Mg(2+).

This sequence belongs to the anthranilate synthase component I family. As to quaternary structure, heterotetramer consisting of two non-identical subunits: a beta subunit (TrpG) and a large alpha subunit (TrpE). Mg(2+) is required as a cofactor.

The enzyme catalyses chorismate + L-glutamine = anthranilate + pyruvate + L-glutamate + H(+). Its pathway is amino-acid biosynthesis; L-tryptophan biosynthesis; L-tryptophan from chorismate: step 1/5. Its activity is regulated as follows. Feedback inhibited by tryptophan. Functionally, part of a heterotetrameric complex that catalyzes the two-step biosynthesis of anthranilate, an intermediate in the biosynthesis of L-tryptophan. In the first step, the glutamine-binding beta subunit (TrpG) of anthranilate synthase (AS) provides the glutamine amidotransferase activity which generates ammonia as a substrate that, along with chorismate, is used in the second step, catalyzed by the large alpha subunit of AS (TrpE) to produce anthranilate. In the absence of TrpG, TrpE can synthesize anthranilate directly from chorismate and high concentrations of ammonia. This chain is Anthranilate synthase component 1 (trpE), found in Thermococcus kodakarensis (strain ATCC BAA-918 / JCM 12380 / KOD1) (Pyrococcus kodakaraensis (strain KOD1)).